An 883-amino-acid chain; its full sequence is Phosphoenolpyruvate carboxylase (883 aa).

Catalysis depends on residues H138 and K546.

Belongs to the PEPCase type 1 family. Mg(2+) serves as cofactor.

The catalysed reaction is oxaloacetate + phosphate = phosphoenolpyruvate + hydrogencarbonate. Its function is as follows. Forms oxaloacetate, a four-carbon dicarboxylic acid source for the tricarboxylic acid cycle. This Salmonella paratyphi A (strain ATCC 9150 / SARB42) protein is Phosphoenolpyruvate carboxylase.